Consider the following 138-residue polypeptide: ATP synthase epsilon chain (138 aa).

It belongs to the ATPase epsilon chain family. F-type ATPases have 2 components, CF(1) - the catalytic core - and CF(0) - the membrane proton channel. CF(1) has five subunits: alpha(3), beta(3), gamma(1), delta(1), epsilon(1). CF(0) has three main subunits: a, b and c.

It is found in the cell inner membrane. Its function is as follows. Produces ATP from ADP in the presence of a proton gradient across the membrane. The polypeptide is ATP synthase epsilon chain (Acidovorax ebreus (strain TPSY) (Diaphorobacter sp. (strain TPSY))).